Here is a 238-residue protein sequence, read N- to C-terminus: 1-(5-phosphoribosyl)-5-[(5-phosphoribosylamino)methylideneamino] imidazole-4-carboxamide isomerase (238 aa).

Residue Asp8 is the Proton acceptor of the active site. The active-site Proton donor is Asp130.

This sequence belongs to the HisA/HisF family.

It localises to the cytoplasm. The catalysed reaction is 1-(5-phospho-beta-D-ribosyl)-5-[(5-phospho-beta-D-ribosylamino)methylideneamino]imidazole-4-carboxamide = 5-[(5-phospho-1-deoxy-D-ribulos-1-ylimino)methylamino]-1-(5-phospho-beta-D-ribosyl)imidazole-4-carboxamide. It participates in amino-acid biosynthesis; L-histidine biosynthesis; L-histidine from 5-phospho-alpha-D-ribose 1-diphosphate: step 4/9. This is 1-(5-phosphoribosyl)-5-[(5-phosphoribosylamino)methylideneamino] imidazole-4-carboxamide isomerase from Methanococcus vannielii (strain ATCC 35089 / DSM 1224 / JCM 13029 / OCM 148 / SB).